Here is a 725-residue protein sequence, read N- to C-terminus: Phosphoribosylformylglycinamidine synthase subunit PurL (725 aa).

Histidine 42 is a catalytic residue. Positions 45 and 84 each coordinate ATP. Glutamate 86 provides a ligand contact to Mg(2+). Substrate is bound by residues 87–90 (SHNH) and arginine 109. Residue histidine 88 is the Proton acceptor of the active site. A Mg(2+)-binding site is contributed by aspartate 110. Glutamine 237 is a substrate binding site. Aspartate 265 lines the Mg(2+) pocket. 309–311 (ESQ) contacts substrate. ATP-binding residues include aspartate 491 and glycine 528. Asparagine 529 serves as a coordination point for Mg(2+). Residue serine 531 coordinates substrate.

It belongs to the FGAMS family. In terms of assembly, monomer. Part of the FGAM synthase complex composed of 1 PurL, 1 PurQ and 2 PurS subunits.

It localises to the cytoplasm. The catalysed reaction is N(2)-formyl-N(1)-(5-phospho-beta-D-ribosyl)glycinamide + L-glutamine + ATP + H2O = 2-formamido-N(1)-(5-O-phospho-beta-D-ribosyl)acetamidine + L-glutamate + ADP + phosphate + H(+). It participates in purine metabolism; IMP biosynthesis via de novo pathway; 5-amino-1-(5-phospho-D-ribosyl)imidazole from N(2)-formyl-N(1)-(5-phospho-D-ribosyl)glycinamide: step 1/2. Functionally, part of the phosphoribosylformylglycinamidine synthase complex involved in the purines biosynthetic pathway. Catalyzes the ATP-dependent conversion of formylglycinamide ribonucleotide (FGAR) and glutamine to yield formylglycinamidine ribonucleotide (FGAM) and glutamate. The FGAM synthase complex is composed of three subunits. PurQ produces an ammonia molecule by converting glutamine to glutamate. PurL transfers the ammonia molecule to FGAR to form FGAM in an ATP-dependent manner. PurS interacts with PurQ and PurL and is thought to assist in the transfer of the ammonia molecule from PurQ to PurL. The sequence is that of Phosphoribosylformylglycinamidine synthase subunit PurL from Campylobacter lari (strain RM2100 / D67 / ATCC BAA-1060).